Reading from the N-terminus, the 360-residue chain is Phospho-N-acetylmuramoyl-pentapeptide-transferase (360 aa).

10 consecutive transmembrane segments (helical) span residues 26 to 46 (AILALLTALMFSLWWGPKLIE), 74 to 94 (MGGLLILAGIFIGVLLWGDLG), 97 to 117 (YVWVMLFVLGSFGLIGFIDDY), 132 to 152 (WKYIFQSLAALVVAFYLFYST), 168 to 188 (ILPQLGLMFIVLTYFTIVGAS), 199 to 219 (GLAIMPTVMVAAAFALIAYLS), 236 to 256 (SGELVIVCTAIVGAGLGFLWF), 263 to 283 (VFMGDVGSLSLGAALGTIAVL), 288 to 308 (ILLVIMGGVFVMETLSVILQV), and 338 to 358 (VIVRFWIISLFLVLLGLATLK).

Belongs to the glycosyltransferase 4 family. MraY subfamily. Mg(2+) serves as cofactor.

Its subcellular location is the cell inner membrane. The enzyme catalyses UDP-N-acetyl-alpha-D-muramoyl-L-alanyl-gamma-D-glutamyl-meso-2,6-diaminopimeloyl-D-alanyl-D-alanine + di-trans,octa-cis-undecaprenyl phosphate = di-trans,octa-cis-undecaprenyl diphospho-N-acetyl-alpha-D-muramoyl-L-alanyl-D-glutamyl-meso-2,6-diaminopimeloyl-D-alanyl-D-alanine + UMP. Its pathway is cell wall biogenesis; peptidoglycan biosynthesis. Catalyzes the initial step of the lipid cycle reactions in the biosynthesis of the cell wall peptidoglycan: transfers peptidoglycan precursor phospho-MurNAc-pentapeptide from UDP-MurNAc-pentapeptide onto the lipid carrier undecaprenyl phosphate, yielding undecaprenyl-pyrophosphoryl-MurNAc-pentapeptide, known as lipid I. This chain is Phospho-N-acetylmuramoyl-pentapeptide-transferase, found in Shewanella amazonensis (strain ATCC BAA-1098 / SB2B).